Here is a 91-residue protein sequence, read N- to C-terminus: Small ribosomal subunit protein bS20 (91 aa).

The protein belongs to the bacterial ribosomal protein bS20 family.

Its function is as follows. Binds directly to 16S ribosomal RNA. The protein is Small ribosomal subunit protein bS20 of Thermosipho melanesiensis (strain DSM 12029 / CIP 104789 / BI429).